The sequence spans 204 residues: Probable GTP-binding protein EngB (204 aa).

The segment at 1–21 (MKVSSAEFVTSGTRPAHYPPP) is disordered. The 173-residue stretch at 22–194 (ELPEVAFAGR…WARIEVMLAA (173 aa)) folds into the EngB-type G domain. Residues 30–37 (GRSNVGKS), 57–61 (GRTQL), 75–78 (DLPG), 142–145 (TKCD), and 173–175 (FSA) contribute to the GTP site. Residues S37 and T59 each coordinate Mg(2+).

This sequence belongs to the TRAFAC class TrmE-Era-EngA-EngB-Septin-like GTPase superfamily. EngB GTPase family. The cofactor is Mg(2+).

In terms of biological role, necessary for normal cell division and for the maintenance of normal septation. The protein is Probable GTP-binding protein EngB of Geobacter metallireducens (strain ATCC 53774 / DSM 7210 / GS-15).